We begin with the raw amino-acid sequence, 239 residues long: Proteasome activator complex subunit 2 (239 aa).

Residue alanine 2 is modified to N-acetylalanine. The residue at position 10 (serine 10) is a Phosphoserine.

The protein belongs to the PA28 family. In terms of assembly, heterodimer of PSME1 and PSME2, which forms a hexameric ring.

Functionally, implicated in immunoproteasome assembly and required for efficient antigen processing. The PA28 activator complex enhances the generation of class I binding peptides by altering the cleavage pattern of the proteasome. The chain is Proteasome activator complex subunit 2 (PSME2) from Homo sapiens (Human).